The chain runs to 312 residues: Probable HTH-type transcriptional regulator LrhA (312 aa).

Residues 11-68 (LDLDLLRTFVAVADLNTFAAAAAAVCRTQSAVSQQMQRLEQLVGKELFARHGRNKLLT) enclose the HTH lysR-type domain. Positions 28-47 (FAAAAAAVCRTQSAVSQQMQ) form a DNA-binding region, H-T-H motif.

Belongs to the LysR transcriptional regulatory family.

Its function is as follows. Not known, does not seem to act on the proton translocating NADH dehydrogenase genes (nuoA-N) which are part of the lrhA operon. The chain is Probable HTH-type transcriptional regulator LrhA (lrhA) from Escherichia coli (strain K12).